The sequence spans 390 residues: Succinate--CoA ligase [ADP-forming] subunit beta (390 aa).

An ATP-grasp domain is found at 9–245 (KHLLKKYNIP…TTQEDEHETM (237 aa)). Residues Lys-46, 53-55 (GRG), Glu-99, Ser-102, and Glu-107 each bind ATP. Mg(2+) is bound by residues Asn-200 and Asp-214. Substrate is bound by residues Asn-265 and 322–324 (GIV).

Belongs to the succinate/malate CoA ligase beta subunit family. As to quaternary structure, heterotetramer of two alpha and two beta subunits. Mg(2+) serves as cofactor.

It carries out the reaction succinate + ATP + CoA = succinyl-CoA + ADP + phosphate. It catalyses the reaction GTP + succinate + CoA = succinyl-CoA + GDP + phosphate. It participates in carbohydrate metabolism; tricarboxylic acid cycle; succinate from succinyl-CoA (ligase route): step 1/1. Functionally, succinyl-CoA synthetase functions in the citric acid cycle (TCA), coupling the hydrolysis of succinyl-CoA to the synthesis of either ATP or GTP and thus represents the only step of substrate-level phosphorylation in the TCA. The beta subunit provides nucleotide specificity of the enzyme and binds the substrate succinate, while the binding sites for coenzyme A and phosphate are found in the alpha subunit. The protein is Succinate--CoA ligase [ADP-forming] subunit beta of Coxiella burnetii (strain Dugway 5J108-111).